The following is a 934-amino-acid chain: Serine/threonine-protein kinase KIPK1 (934 aa).

6 disordered regions span residues 20–40 (LPKH…KDLV), 70–113 (RLMS…RFVG), 189–227 (PLMP…FGLQ), 305–343 (SSSA…RPKQ), 395–438 (SIDD…SCNV), and 466–493 (EKET…DYSR). Composition is skewed to polar residues over residues 82 to 94 (SASA…TSPS) and 212 to 227 (NPIS…FGLQ). The segment covering 395-421 (SIDDNPPSYTSSHNPKICTDSLSSVSN) has biased composition (polar residues). A Protein kinase domain is found at 538–879 (FNLLKKLGCG…SVEIKRHPFF (342 aa)). ATP-binding positions include 544–552 (LGCGDIGTV) and K567. The Proton acceptor role is filled by D663. Residues 738 to 773 (SSNQQQGRKPKRGDHLSKTQQHLSRSLPQLVAEPTE) form a disordered region. Polar residues predominate over residues 755–764 (KTQQHLSRSL).

It belongs to the protein kinase superfamily. Ser/Thr protein kinase family. As to quaternary structure, interacts with KCBP. Interacts with PERK8, PERK9, PERK10 and PERK13. Autophosphorylated. In terms of tissue distribution, expressed in roots, cauline leaves, flowers and siliques.

It localises to the cytoplasm. The protein localises to the nucleus. The catalysed reaction is L-seryl-[protein] + ATP = O-phospho-L-seryl-[protein] + ADP + H(+). It catalyses the reaction L-threonyl-[protein] + ATP = O-phospho-L-threonyl-[protein] + ADP + H(+). Could be involved in the negative regulation of root growth. The sequence is that of Serine/threonine-protein kinase KIPK1 from Arabidopsis thaliana (Mouse-ear cress).